Reading from the N-terminus, the 409-residue chain is Serine/threonine transporter SstT (409 aa).

Helical transmembrane passes span Gly14 to Ser34, Phe48 to Ile68, Ile82 to Phe102, Ala141 to Leu161, Ile192 to Gly212, Leu216 to Val236, Ile290 to Leu310, Ile322 to Val342, and Phe357 to Ile377.

Belongs to the dicarboxylate/amino acid:cation symporter (DAACS) (TC 2.A.23) family.

The protein localises to the cell inner membrane. It catalyses the reaction L-serine(in) + Na(+)(in) = L-serine(out) + Na(+)(out). The enzyme catalyses L-threonine(in) + Na(+)(in) = L-threonine(out) + Na(+)(out). Functionally, involved in the import of serine and threonine into the cell, with the concomitant import of sodium (symport system). This is Serine/threonine transporter SstT from Shewanella woodyi (strain ATCC 51908 / MS32).